A 235-amino-acid polypeptide reads, in one-letter code: RNA pyrophosphohydrolase (235 aa).

In terms of domain architecture, Nudix hydrolase spans 6–149 (GFRPNVGIIL…KREVYQLALS (144 aa)). The Nudix box signature appears at 38–59 (GGIKYGETPEQAMFRELHEEVG). The interval 161–235 (APLSPYGRGG…PDDTAPKDNS (75 aa)) is disordered. Residues 171-196 (QHRERDGRDARDSRERSSDQGGRNEQ) are compositionally biased toward basic and acidic residues. Residues 203–220 (TVTTTTVIVETVSVSAPT) show a composition bias toward low complexity.

The protein belongs to the Nudix hydrolase family. RppH subfamily. Requires a divalent metal cation as cofactor.

In terms of biological role, accelerates the degradation of transcripts by removing pyrophosphate from the 5'-end of triphosphorylated RNA, leading to a more labile monophosphorylated state that can stimulate subsequent ribonuclease cleavage. The chain is RNA pyrophosphohydrolase from Ralstonia pickettii (strain 12J).